The sequence spans 165 residues: 2-C-methyl-D-erythritol 2,4-cyclodiphosphate synthase (165 aa).

The a divalent metal cation site is built by aspartate 13 and histidine 15. 4-CDP-2-C-methyl-D-erythritol 2-phosphate-binding positions include 13-15 (DRH) and 39-40 (HS). Residue histidine 47 coordinates a divalent metal cation. 4-CDP-2-C-methyl-D-erythritol 2-phosphate contacts are provided by residues 61–63 (DIG) and phenylalanine 141.

It belongs to the IspF family. Homotrimer. The cofactor is a divalent metal cation.

The enzyme catalyses 4-CDP-2-C-methyl-D-erythritol 2-phosphate = 2-C-methyl-D-erythritol 2,4-cyclic diphosphate + CMP. It participates in isoprenoid biosynthesis; isopentenyl diphosphate biosynthesis via DXP pathway; isopentenyl diphosphate from 1-deoxy-D-xylulose 5-phosphate: step 4/6. Involved in the biosynthesis of isopentenyl diphosphate (IPP) and dimethylallyl diphosphate (DMAPP), two major building blocks of isoprenoid compounds. Catalyzes the conversion of 4-diphosphocytidyl-2-C-methyl-D-erythritol 2-phosphate (CDP-ME2P) to 2-C-methyl-D-erythritol 2,4-cyclodiphosphate (ME-CPP) with a corresponding release of cytidine 5-monophosphate (CMP). This is 2-C-methyl-D-erythritol 2,4-cyclodiphosphate synthase from Thermotoga neapolitana (strain ATCC 49049 / DSM 4359 / NBRC 107923 / NS-E).